A 124-amino-acid chain; its full sequence is Putative peptidyl-tRNA hydrolase (124 aa).

The protein belongs to the PTH2 family.

The enzyme catalyses an N-acyl-L-alpha-aminoacyl-tRNA + H2O = an N-acyl-L-amino acid + a tRNA + H(+). The chain is Putative peptidyl-tRNA hydrolase from Fowlpox virus (strain NVSL) (FPV).